Here is a 157-residue protein sequence, read N- to C-terminus: MLVTTSRKPSAKSRTLCKLLSRFTASRCISRGKMGMQELLDFTEGNTFIVVGEYHGNPGELSFHDNEGKLLFSIRFSDRYSEEIDSYWFPDVLPVLTGEGEIAEALESFFHFERVESDRVVQLPQNSLVMAIGDKEIDFMGSGKSLFKFNIKGFKKY.

The 157-residue stretch at 1–157 (MLVTTSRKPS…KFNIKGFKKY (157 aa)) folds into the Brix domain.

In terms of biological role, probably involved in the biogenesis of the ribosome. The sequence is that of Probable Brix domain-containing ribosomal biogenesis protein from Methanosarcina mazei (strain ATCC BAA-159 / DSM 3647 / Goe1 / Go1 / JCM 11833 / OCM 88) (Methanosarcina frisia).